Here is a 530-residue protein sequence, read N- to C-terminus: Bifunctional purine biosynthesis protein PurH (530 aa).

Residues 1–148 (MNNARPIRRA…KNHKDVTIVV (148 aa)) enclose the MGS-like domain.

Belongs to the PurH family.

The enzyme catalyses (6R)-10-formyltetrahydrofolate + 5-amino-1-(5-phospho-beta-D-ribosyl)imidazole-4-carboxamide = 5-formamido-1-(5-phospho-D-ribosyl)imidazole-4-carboxamide + (6S)-5,6,7,8-tetrahydrofolate. It carries out the reaction IMP + H2O = 5-formamido-1-(5-phospho-D-ribosyl)imidazole-4-carboxamide. Its pathway is purine metabolism; IMP biosynthesis via de novo pathway; 5-formamido-1-(5-phospho-D-ribosyl)imidazole-4-carboxamide from 5-amino-1-(5-phospho-D-ribosyl)imidazole-4-carboxamide (10-formyl THF route): step 1/1. It functions in the pathway purine metabolism; IMP biosynthesis via de novo pathway; IMP from 5-formamido-1-(5-phospho-D-ribosyl)imidazole-4-carboxamide: step 1/1. This chain is Bifunctional purine biosynthesis protein PurH, found in Aliivibrio fischeri (strain MJ11) (Vibrio fischeri).